The following is a 307-amino-acid chain: Acyl transferase (307 aa).

Active-site charge relay system residues include Ser116, Asp213, and His243.

It belongs to the LuxD family.

It functions in the pathway lipid metabolism; fatty acid reduction for biolumincescence. Acyl transferase is part of the fatty acid reductase system required for aldehyde biosynthesis; it produces fatty acids for the luminescent reaction. The chain is Acyl transferase from Aliivibrio fischeri (strain MJ11) (Vibrio fischeri).